We begin with the raw amino-acid sequence, 948 residues long: Protein translocase subunit SecA (948 aa).

ATP contacts are provided by residues Q90, 108 to 112 (GEGKT), and D509.

Belongs to the SecA family. In terms of assembly, monomer and homodimer. Part of the essential Sec protein translocation apparatus which comprises SecA, SecYEG and auxiliary proteins SecDF. Other proteins may also be involved.

It localises to the cell inner membrane. Its subcellular location is the cellular thylakoid membrane. The protein localises to the cytoplasm. The catalysed reaction is ATP + H2O + cellular proteinSide 1 = ADP + phosphate + cellular proteinSide 2.. Part of the Sec protein translocase complex. Interacts with the SecYEG preprotein conducting channel. Has a central role in coupling the hydrolysis of ATP to the transfer of proteins into and across the cell membrane, serving as an ATP-driven molecular motor driving the stepwise translocation of polypeptide chains across the membrane. Its function is as follows. Probably participates in protein translocation into and across both the cytoplasmic and thylakoid membranes in cyanobacterial cells. This chain is Protein translocase subunit SecA, found in Prochlorococcus marinus (strain MIT 9313).